A 243-amino-acid chain; its full sequence is GTP cyclohydrolase 1 (243 aa).

Thr-15 carries the post-translational modification Phosphothreonine. The disordered stretch occupies residues 18–55; that stretch reads NIRPTSPYTLNPPVERDGFSWPSVGTRQRAEETEEEEK. Residue Ser-23 is modified to Phosphoserine. Cys-132, His-135, and Cys-203 together coordinate Zn(2+).

Belongs to the GTP cyclohydrolase I family. Homodimer.

The catalysed reaction is GTP + H2O = 7,8-dihydroneopterin 3'-triphosphate + formate + H(+). It functions in the pathway cofactor biosynthesis; 7,8-dihydroneopterin triphosphate biosynthesis; 7,8-dihydroneopterin triphosphate from GTP: step 1/1. GTP cyclohydrolase 1 is the first enzyme in the biosynthetic pathway leading to folic acid. This is GTP cyclohydrolase 1 from Saccharomyces cerevisiae (strain ATCC 204508 / S288c) (Baker's yeast).